Here is a 654-residue protein sequence, read N- to C-terminus: Protein fem-1 homolog A (654 aa).

7 ANK repeats span residues 2–31 (DLHT…REEI), 40–70 (GGGT…SVEA), 82–111 (EGAP…SVNR), 115–145 (TNST…DLEV), 149–178 (HGHT…QVNR), 182–211 (KGNT…RMER), and 214–243 (YGMT…GHGQ). Ser108 carries the post-translational modification Phosphoserine. A disordered region spans residues 241-265 (HGQLSGTELPGEGSSQMAGNHCSTP). The segment covering 253–263 (GSSQMAGNHCS) has biased composition (polar residues). TPR repeat units lie at residues 283 to 317 (VEAL…RHQG) and 375 to 408 (SYYI…QQNN). ANK repeat units follow at residues 519 to 561 (NGFT…DPDS) and 565 to 594 (DNNT…HMDA). Position 608 is a phosphoserine (Ser608).

This sequence belongs to the fem-1 family. Component of a CRL2 E3 ubiquitin-protein ligase complex, also named ECS (Elongin BC-CUL2/5-SOCS-box protein) complex, composed of CUL2, Elongin BC (ELOB and ELOC), RBX1 and substrate-specific adapter FEM1A. Interacts with PTGER4. Interacts with NFKB1; the interaction is direct. Post-translationally, phosphorylated; highly phosphorylated in myoblasts and myotubes. Phosphorylation at Ser-108 and Ser-608 promote PGE2-EP4-mediated inhibition of inflammation. Dephosphorylated by protein phosphatase 2A (PP2A).

It localises to the mitochondrion. The protein localises to the cytoplasm. Its pathway is protein modification; protein ubiquitination. Functionally, substrate-recognition component of a Cul2-RING (CRL2) E3 ubiquitin-protein ligase complex of the DesCEND (destruction via C-end degrons) pathway, which recognizes a C-degron located at the extreme C terminus of target proteins, leading to their ubiquitination and degradation. The C-degron recognized by the DesCEND pathway is usually a motif of less than ten residues and can be present in full-length proteins, truncated proteins or proteolytically cleaved forms. The CRL2(FEM1A) complex specifically recognizes proteins with an arginine at the C-terminus: recognizes and binds proteins ending with -Lys/Arg-Xaa-Arg and -Lys/Arg-Xaa-Xaa-Arg C-degrons, such as SIL1 or OR51B2, leading to their ubiquitination and degradation. Involved in PGE2-EP4-mediated inhibition of inflammation of macrophages via interaction with NFKB1 and PTGER4. Promotes inflammation in brain microglia through MAP2K4/MKK4-mediated signaling. The chain is Protein fem-1 homolog A from Rattus norvegicus (Rat).